We begin with the raw amino-acid sequence, 202 residues long: LexA repressor (202 aa).

A DNA-binding region (H-T-H motif) is located at residues I28 to K47. Catalysis depends on for autocatalytic cleavage activity residues S126 and K163.

It belongs to the peptidase S24 family. In terms of assembly, homodimer.

The catalysed reaction is Hydrolysis of Ala-|-Gly bond in repressor LexA.. Its function is as follows. Represses a number of genes involved in the response to DNA damage (SOS response), including recA and lexA. In the presence of single-stranded DNA, RecA interacts with LexA causing an autocatalytic cleavage which disrupts the DNA-binding part of LexA, leading to derepression of the SOS regulon and eventually DNA repair. This is LexA repressor from Leptospira biflexa serovar Patoc (strain Patoc 1 / Ames).